A 508-amino-acid chain; its full sequence is Protein S-acyltransferase 18 (508 aa).

2 consecutive transmembrane segments (helical) span residues 17 to 37 and 42 to 62; these read IVGA…LGFF and IAVI…IVLF. One can recognise a DHHC domain in the interval 158-208; sequence SYCSLCDLEVKRSSKHCRTCNRCVEGFDHHCRWLNNCVGKKNYTTFILLMV. Residue cysteine 188 is the S-palmitoyl cysteine intermediate of the active site. 2 helical membrane passes run 203–223 and 250–270; these read FILL…TALA and WALA…SAAM. Positions 443–468 are disordered; the sequence is VSPGRFSSPRRRFSGSSSSTVPSPKQ. Residues 456–466 are compositionally biased toward low complexity; the sequence is SGSSSSTVPSP.

The protein belongs to the DHHC palmitoyltransferase family.

It localises to the endoplasmic reticulum membrane. The protein resides in the cytoplasmic vesicle membrane. It carries out the reaction L-cysteinyl-[protein] + hexadecanoyl-CoA = S-hexadecanoyl-L-cysteinyl-[protein] + CoA. S-acyltransferase involved in protein lipid modification. The sequence is that of Protein S-acyltransferase 18 (PAT18) from Arabidopsis thaliana (Mouse-ear cress).